Reading from the N-terminus, the 96-residue chain is Co-chaperonin GroES (96 aa).

Belongs to the GroES chaperonin family. Heptamer of 7 subunits arranged in a ring. Interacts with the chaperonin GroEL.

The protein resides in the cytoplasm. Together with the chaperonin GroEL, plays an essential role in assisting protein folding. The GroEL-GroES system forms a nano-cage that allows encapsulation of the non-native substrate proteins and provides a physical environment optimized to promote and accelerate protein folding. GroES binds to the apical surface of the GroEL ring, thereby capping the opening of the GroEL channel. The protein is Co-chaperonin GroES of Cupriavidus necator (strain ATCC 17699 / DSM 428 / KCTC 22496 / NCIMB 10442 / H16 / Stanier 337) (Ralstonia eutropha).